Consider the following 143-residue polypeptide: Large ribosomal subunit protein uL11 (143 aa).

This sequence belongs to the universal ribosomal protein uL11 family. As to quaternary structure, part of the ribosomal stalk of the 50S ribosomal subunit. Interacts with L10 and the large rRNA to form the base of the stalk. L10 forms an elongated spine to which L12 dimers bind in a sequential fashion forming a multimeric L10(L12)X complex. In terms of processing, one or more lysine residues are methylated.

In terms of biological role, forms part of the ribosomal stalk which helps the ribosome interact with GTP-bound translation factors. The sequence is that of Large ribosomal subunit protein uL11 from Dechloromonas aromatica (strain RCB).